The following is a 694-amino-acid chain: DNA-binding protein RFX2 (694 aa).

Positions 174-249 (HLQWLLDNYE…YHYYGIRLKP (76 aa)) form a DNA-binding region, RFX-type winged-helix. Disordered regions lie at residues 267 to 310 (QQPI…QHHQ) and 658 to 694 (KDDVSELGSDTEGDPHISGQPPVKRERVELNHSMQEM). The span at 289–299 (PANSSQHASPE) shows a compositional bias: polar residues. The segment covering 300–310 (QSVAAQSQHHQ) has biased composition (low complexity).

Belongs to the RFX family. As to quaternary structure, homodimer. Heterodimer; heterodimerizes with other rfx proteins. Preferentially expressed in ciliated tissues, such as neural tube, gastrocoel roof plate, epidermal multiciliated cells, otic vesicles and kidneys.

Its subcellular location is the nucleus. The protein localises to the cytoplasm. Transcription factor that acts as a key regulator of ciliogenesis. Specifically regulates expression of genes required for cilium assembly and function. Recognizes and binds the X-box, a regulatory motif with DNA sequence 5'-GTNRCC(0-3N)RGYAAC-3' present on promoters. Required for neural tube closure and neural ciliogenesis. This chain is DNA-binding protein RFX2 (rfx2), found in Xenopus laevis (African clawed frog).